A 130-amino-acid chain; its full sequence is Small ribosomal subunit protein uS8 (130 aa).

This sequence belongs to the universal ribosomal protein uS8 family. Part of the 30S ribosomal subunit. Contacts proteins S5 and S12.

Its function is as follows. One of the primary rRNA binding proteins, it binds directly to 16S rRNA central domain where it helps coordinate assembly of the platform of the 30S subunit. This is Small ribosomal subunit protein uS8 from Ruegeria pomeroyi (strain ATCC 700808 / DSM 15171 / DSS-3) (Silicibacter pomeroyi).